The primary structure comprises 77 residues: Chaplin-H (77 aa).

The signal sequence occupies residues 1–25 (MLKKVVAAAAATGGLVLAGAGMAVA). Residues 36–76 (SPGVLSGNVVQVPVHVPVNVCGNTISVIGLLNPAFGNVCIN) form the Chaplin domain. Forms amyloid fibrils in vitro regions lie at residues 38–54 (GVLS…VPVN) and 57–72 (GNTI…AFGN). Cysteine 56 and cysteine 74 are joined by a disulfide.

The protein belongs to the chaplin family. Short chaplin subfamily. Homodimer; disulfide linked. About 10% of ChpH isolated from cell wall forms disulfide-bonded homodimers.

Its subcellular location is the cell surface. It localises to the secreted. It is found in the cell wall. The protein resides in the fimbrium. In terms of biological role, one of 8 partially redundant surface-active proteins required for efficient formation of aerial mycelium; the short chaplins assemble into a hydrophobic, amyloidal fibrillar surface layer that envelopes and protects aerial hyphae and spores, presumably anchored to the long chaplins. Chaplins have an overlapping function with the surface-active SapB peptide; chaplins are essential on minimal medium while on rich medium both chaplins and SapB are required for efficient aerial hyphae formation. Chaplins are also involved in cell attachment to a hydrophobic surface. Forms amyloid fibrils in vitro probably composed of stacked beta-sheets. A small chaplin extract (ChpD, ChpE, ChpF, ChpG and ChpH) self-assembles into 2 different amyloids; small fibrils at the air-water interface form an amphipathic membrane that resembles spore-surface structures involved in aerial hyphae formation, and hydrophilic fibrils in solution that resemble the fibers that attach cells to a hydrophobic surface. At the air-water interface the hydrophilic surface is in contact with water (probably equivalent to the peptidoglycan layer), while the hydrophobic face is exposed to the air, making the surface of the aerial hyphae hydrophobic. A minimal chaplin strain capable of forming aerial mycelium/hyphae on minimal medium contains ChpC, ChpE and ChpH. The strain also has restored rodlet formation on the hyphae surface. A small chaplin extract applied to a chaplin-deficient strain restores aerial hyphae formation. The small chaplin extract forms an amyloid-like structure similar to that seen on the surface of cells without rodlets (rdlA-rdlB deletions), and is highly surface active, reducing surface tension from 72 to 26 mJ/m(2), which probably allows escape of hyphae from an aqueous environment into air. The polypeptide is Chaplin-H (Streptomyces coelicolor (strain ATCC BAA-471 / A3(2) / M145)).